Consider the following 1296-residue polypeptide: Protein ORF75 (1296 aa).

It is found in the virion tegument. This chain is Protein ORF75 (ORF75), found in Homo sapiens (Human).